The primary structure comprises 312 residues: Olfactory receptor 1D5 (312 aa).

At 1–25 the chain is on the extracellular side; sequence MDGDNQSENSQFLLLGISESPEQQR. Asn5 is a glycosylation site (N-linked (GlcNAc...) asparagine). A helical transmembrane segment spans residues 26–49; it reads ILFWMFLSMYLVTVLGNVLIILAI. Over 50–57 the chain is Cytoplasmic; it reads SSDSHLHT. Residues 58-79 traverse the membrane as a helical segment; that stretch reads PMYFFLANLSFTDLFFVTNTIP. The Extracellular portion of the chain corresponds to 80–100; that stretch reads KMLVNFQSQNKAISYAGCLTQ. An intrachain disulfide couples Cys97 to Cys189. The chain crosses the membrane as a helical span at residues 101–120; the sequence is LYFLVSLVTLDNLILAVMAY. At 121–140 the chain is on the cytoplasmic side; sequence DRYVATCCPLHYVTAMSPGL. Residues 141–158 traverse the membrane as a helical segment; that stretch reads CVLLLSLCWGLSVLYGLL. Topologically, residues 159 to 196 are extracellular; that stretch reads LTFLLTRVTFCGPREIHYLFCDMYILLWLACSNTHIIH. A helical transmembrane segment spans residues 197 to 220; it reads TALIATGCFIFLTPLGFMTTSYVR. Residues 221–237 lie on the Cytoplasmic side of the membrane; it reads IVRTILQMPSASKKYKT. The chain crosses the membrane as a helical span at residues 238 to 260; it reads FSTCASHLGVVSLFYGTLAMVYL. At 261–271 the chain is on the extracellular side; it reads QPLHTYSMKDS. The chain crosses the membrane as a helical span at residues 272–291; the sequence is VATVMYAVLTPMMNPFIYRL. The Cytoplasmic segment spans residues 292–312; it reads RNKDMHGAPGRVLWRPFQRPK.

This sequence belongs to the G-protein coupled receptor 1 family.

The protein localises to the cell membrane. Odorant receptor. The sequence is that of Olfactory receptor 1D5 (OR1D5) from Homo sapiens (Human).